The sequence spans 337 residues: tRNA N6-adenosine threonylcarbamoyltransferase (337 aa).

Positions 111 and 115 each coordinate Fe cation. Residues 134–138 (LVSGG), D167, G180, and N272 contribute to the substrate site. D300 contributes to the Fe cation binding site.

This sequence belongs to the KAE1 / TsaD family. Requires Fe(2+) as cofactor.

It is found in the cytoplasm. It carries out the reaction L-threonylcarbamoyladenylate + adenosine(37) in tRNA = N(6)-L-threonylcarbamoyladenosine(37) in tRNA + AMP + H(+). In terms of biological role, required for the formation of a threonylcarbamoyl group on adenosine at position 37 (t(6)A37) in tRNAs that read codons beginning with adenine. Is involved in the transfer of the threonylcarbamoyl moiety of threonylcarbamoyl-AMP (TC-AMP) to the N6 group of A37, together with TsaE and TsaB. TsaD likely plays a direct catalytic role in this reaction. This Methylococcus capsulatus (strain ATCC 33009 / NCIMB 11132 / Bath) protein is tRNA N6-adenosine threonylcarbamoyltransferase.